The following is a 330-amino-acid chain: uncharacterized protein (330 aa).

A helical membrane pass occupies residues 2–22 (IKPIYLIIIGTVICLVILYYF). N-linked (GlcNAc...) asparagine; by host glycans are attached at residues asparagine 72, asparagine 94, asparagine 234, and asparagine 315.

It localises to the membrane. This is an uncharacterized protein from Acanthamoeba polyphaga mimivirus (APMV).